Reading from the N-terminus, the 693-residue chain is DNA ligase (693 aa).

Residues 40–44 (DSEYD), 89–90 (SL), and glutamate 121 contribute to the NAD(+) site. Residue lysine 123 is the N6-AMP-lysine intermediate of the active site. The NAD(+) site is built by arginine 144, glutamate 179, lysine 295, and lysine 319. Cysteine 413, cysteine 416, cysteine 431, and cysteine 437 together coordinate Zn(2+). Residues 610–693 (REQNILTGKI…AFIKCLEKEV (84 aa)) enclose the BRCT domain.

The protein belongs to the NAD-dependent DNA ligase family. LigA subfamily. Mg(2+) serves as cofactor. Requires Mn(2+) as cofactor.

The catalysed reaction is NAD(+) + (deoxyribonucleotide)n-3'-hydroxyl + 5'-phospho-(deoxyribonucleotide)m = (deoxyribonucleotide)n+m + AMP + beta-nicotinamide D-nucleotide.. Its function is as follows. DNA ligase that catalyzes the formation of phosphodiester linkages between 5'-phosphoryl and 3'-hydroxyl groups in double-stranded DNA using NAD as a coenzyme and as the energy source for the reaction. It is essential for DNA replication and repair of damaged DNA. The sequence is that of DNA ligase from Rickettsia typhi (strain ATCC VR-144 / Wilmington).